Consider the following 452-residue polypeptide: tRNA modification GTPase MnmE (452 aa).

(6S)-5-formyl-5,6,7,8-tetrahydrofolate contacts are provided by Arg21, Glu78, and Lys118. The 162-residue stretch at 214 to 375 (GMKVVIAGRP…LREHLKKSMG (162 aa)) folds into the TrmE-type G domain. Position 224 (Asn224) interacts with K(+). Residues 224–229 (NAGKSS), 243–249 (TNIAGTT), and 268–271 (DTAG) each bind GTP. Ser228 contributes to the Mg(2+) binding site. K(+) contacts are provided by Thr243, Ile245, and Thr248. Residue Thr249 participates in Mg(2+) binding. Lys452 serves as a coordination point for (6S)-5-formyl-5,6,7,8-tetrahydrofolate.

This sequence belongs to the TRAFAC class TrmE-Era-EngA-EngB-Septin-like GTPase superfamily. TrmE GTPase family. As to quaternary structure, homodimer. Heterotetramer of two MnmE and two MnmG subunits. It depends on K(+) as a cofactor.

The protein localises to the cytoplasm. In terms of biological role, exhibits a very high intrinsic GTPase hydrolysis rate. Involved in the addition of a carboxymethylaminomethyl (cmnm) group at the wobble position (U34) of certain tRNAs, forming tRNA-cmnm(5)s(2)U34. The protein is tRNA modification GTPase MnmE of Actinobacillus pleuropneumoniae serotype 3 (strain JL03).